Reading from the N-terminus, the 882-residue chain is Leucine--tRNA ligase (882 aa).

Residues 43 to 53 carry the 'HIGH' region motif; sequence PYPSGNLHMGH. Residues 632–636 carry the 'KMSKS' region motif; it reads TMSKS. Lysine 635 serves as a coordination point for ATP.

The protein belongs to the class-I aminoacyl-tRNA synthetase family.

It localises to the cytoplasm. It catalyses the reaction tRNA(Leu) + L-leucine + ATP = L-leucyl-tRNA(Leu) + AMP + diphosphate. The protein is Leucine--tRNA ligase of Synechococcus sp. (strain JA-2-3B'a(2-13)) (Cyanobacteria bacterium Yellowstone B-Prime).